Here is a 269-residue protein sequence, read N- to C-terminus: Prespore protein Dd31 (269 aa).

Polar residues predominate over residues 1-17; it reads MEHNNNPGTPQMSSEFP. A disordered region spans residues 1–35; it reads MEHNNNPGTPQMSSEFPASTTQTSSSAAAYDNSSH. The span at 18–29 shows a compositional bias: low complexity; it reads ASTTQTSSSAAA. 4 helical membrane passes run 111–131, 139–159, 177–197, and 225–245; these read FGIFVFLWEAAALVYNWVVSI, VDNFFLALFYMIVGVPTLYFL, YAYLMALLGVVLFNIIFFVGF, and VSLFFWFVGVFLTIALFIMYL.

Belongs to the SCAMP family.

Its subcellular location is the membrane. It is found in the spore coat. This Dictyostelium discoideum (Social amoeba) protein is Prespore protein Dd31 (spiA).